Reading from the N-terminus, the 81-residue chain is RNA-binding protein Hfq (81 aa).

Residues 10-70 (DLFLNSVRKS…ISTIMPSQPV (61 aa)) form the Sm domain.

Belongs to the Hfq family. Homohexamer.

In terms of biological role, RNA chaperone that binds small regulatory RNA (sRNAs) and mRNAs to facilitate mRNA translational regulation in response to envelope stress, environmental stress and changes in metabolite concentrations. Also binds with high specificity to tRNAs. This chain is RNA-binding protein Hfq, found in Mesorhizobium japonicum (strain LMG 29417 / CECT 9101 / MAFF 303099) (Mesorhizobium loti (strain MAFF 303099)).